The primary structure comprises 37 residues: Esculentin-2B (37 aa).

A disulfide bridge links C31 with C37.

The protein belongs to the frog skin active peptide (FSAP) family. Esculentin subfamily. Expressed by the skin glands.

Its subcellular location is the secreted. Shows antibacterial activity against representative Gram-negative and Gram-positive bacterial species, and hemolytic activity. This Pelophylax lessonae (Pool frog) protein is Esculentin-2B.